Here is a 263-residue protein sequence, read N- to C-terminus: Leukocyte-associated immunoglobulin-like receptor 1 (263 aa).

The signal sequence occupies residues 1-21 (MSLHPVILLVLVLCLGWKINT). The Extracellular portion of the chain corresponds to 22–144 (QEGSLPDITI…TSWLKTYSIY (123 aa)). The region spanning 27–115 (PDITIFPNSS…TWSERSKTLE (89 aa)) is the Ig-like C2-type domain. N-linked (GlcNAc...) asparagine glycans are attached at residues N34 and N90. A disulfide bridge links C49 with C99. A helical transmembrane segment spans residues 145–165 (IFTVVSVIFLLCLSALLFCFL). Residues 166–263 (RHRQKKQGLP…SSTYAAIIRH (98 aa)) lie on the Cytoplasmic side of the membrane. 2 short sequence motifs (ITIM motif) span residues 226–231 (VTYIQL) and 255–260 (STYAAI). Residues Y228 and Y257 each carry the phosphotyrosine modification.

In terms of assembly, interacts with SH2 domains of tyrosine-protein phosphatases PTPN6 and PTPN11. The interaction with PTPN6 is constitutive. Interacts with the SH2 domain of CSK. Binds with high affinity to extracellular matrix collagens, the interaction is functionally important. In terms of processing, phosphorylation at Tyr-228 and Tyr-257 activates it. May be phosphorylated by LCK. N-glycosylated. Expressed in lymphoid organs and in cell lines of hemopoietic origin.

The protein localises to the cell membrane. Functions as an inhibitory receptor that plays a constitutive negative regulatory role on cytolytic function of natural killer (NK) cells, B-cells and T-cells. Activation by Tyr phosphorylation results in recruitment and activation of the phosphatases PTPN6 and PTPN11. It also reduces the increase of intracellular calcium evoked by B-cell receptor ligation. May also play its inhibitory role independently of SH2-containing phosphatases. Modulates cytokine production in CD4+ T-cells, down-regulating IL2 and IFNG production while inducing secretion of transforming growth factor beta. Also down-regulates IgG and IgE production in B-cells as well as IL8, IL10 and TNF secretion. Inhibits proliferation and induces apoptosis in myeloid leukemia cell lines as well as prevents nuclear translocation of NF-kappa-B p65 subunit/RELA and phosphorylation of I-kappa-B alpha/CHUK in these cells. Inhibits the differentiation of peripheral blood precursors towards dendritic cells. The chain is Leukocyte-associated immunoglobulin-like receptor 1 (Lair1) from Mus musculus (Mouse).